Here is a 651-residue protein sequence, read N- to C-terminus: Apical membrane antigen 1-like protein (651 aa).

The signal sequence occupies residues 1–41 (MPTESRSILARAEETRCRHLSRLLRAGLVFLLCDVLTSCLA). Residues 42–81 (TPELQNTVIRSSKAHHLQLLFSSRSTPAVKFPLDATLSAP) constitute a propeptide, removed in mature form. Topologically, residues 42 to 570 (TPELQNTVIR…VEKEGSGGNT (529 aa)) are extracellular. Cystine bridges form between Cys-141–Cys-309, Cys-215–Cys-248, Cys-264–Cys-277, Cys-327–Cys-417, Cys-347–Cys-408, Cys-441–Cys-463, and Cys-453–Cys-475. Residue Asn-230 is glycosylated (N-linked (GlcNAc...) asparagine). Residues 483-486 (PPVK) form a 1; approximate repeat. A 12 x 4 AA approximate tandem-repeats of P-P-V-E region spans residues 483-531 (PPVKPPVEPPVEPPVEPPVEPPVEPPVEPPVEPPVEPPVEPPVVEPPTE). The segment covering 483 to 547 (PPVKPPVEPP…EPPVVLPPTP (65 aa)) has biased composition (pro residues). The segment at 483–567 (PPVKPPVEPP…DETVEKEGSG (85 aa)) is disordered. 9 repeat units span residues 487-490 (PPVE), 491-494 (PPVE), 495-498 (PPVE), 499-502 (PPVE), 503-506 (PPVE), 507-510 (PPVE), 511-514 (PPVE), 515-518 (PPVE), and 519-522 (PPVE). An 11; approximate repeat occupies 523 to 527 (PPVVE). A 12; approximate repeat occupies 528-531 (PPTE). A helical membrane pass occupies residues 571-591 (ALIAGSVLGMLIILALVGTCV). Residues 592 to 651 (GFYYRKRPLPPTERPTVEASGGREVEGPSDVAVPPDHSWWGEGEHETESLLGSRAVDAEF) are Cytoplasmic-facing. The interval 598–651 (RPLPPTERPTVEASGGREVEGPSDVAVPPDHSWWGEGEHETESLLGSRAVDAEF) is disordered.

It belongs to the apicomplexan parasites AMA1 family. Post-translationally, proteolytically cleaved within its transmembrane domain, releasing a soluble form from the cell surface.

It is found in the cell membrane. The protein localises to the secreted. Functionally, may play a role in host cell invasion. The chain is Apical membrane antigen 1-like protein from Toxoplasma gondii (strain ATCC 50861 / VEG).